A 72-amino-acid polypeptide reads, in one-letter code: DNA gyrase inhibitor YacG (72 aa).

The Zn(2+) site is built by C7, C10, C26, and C30. Positions 44–72 (SIAGEEHTPSSDTARPQLSAEDLALLEQD) are disordered.

This sequence belongs to the DNA gyrase inhibitor YacG family. As to quaternary structure, interacts with GyrB. Zn(2+) serves as cofactor.

Its function is as follows. Inhibits all the catalytic activities of DNA gyrase by preventing its interaction with DNA. Acts by binding directly to the C-terminal domain of GyrB, which probably disrupts DNA binding by the gyrase. This Tolumonas auensis (strain DSM 9187 / NBRC 110442 / TA 4) protein is DNA gyrase inhibitor YacG.